The sequence spans 570 residues: Polypeptide N-acetylgalactosaminyltransferase 2 (570 aa).

Residues M1–R6 are Cytoplasmic-facing. A helical; Signal-anchor for type II membrane protein transmembrane segment spans residues M7 to Y24. Residues S25 to Q570 are Lumenal-facing. A glycan (O-linked (Xyl...) (chondroitin sulfate) serine) is linked at S29. Cystine bridges form between C125–C353, C344–C422, C455–C472, and C495–C512. Residues L134–R239 are catalytic subdomain A. The substrate site is built by T142, D175, and R200. D223 is a Mn(2+) binding site. S224 contacts substrate. H225 is a binding site for Mn(2+). The segment at P299–R361 is catalytic subdomain B. W330 lines the substrate pocket. H358 contacts Mn(2+). The substrate site is built by R361, H364, and Y366. The 124-residue stretch at Q442–S565 folds into the Ricin B-type lectin domain. The N-linked (GlcNAc...) asparagine glycan is linked to N515. At S535 the chain carries Phosphoserine. C538 and C554 are joined by a disulfide.

It belongs to the glycosyltransferase 2 family. GalNAc-T subfamily. Requires Mn(2+) as cofactor. As to expression, widely expressed at high level.

The protein localises to the golgi apparatus. The protein resides in the golgi stack membrane. It localises to the secreted. The catalysed reaction is L-seryl-[protein] + UDP-N-acetyl-alpha-D-galactosamine = a 3-O-[N-acetyl-alpha-D-galactosaminyl]-L-seryl-[protein] + UDP + H(+). It carries out the reaction L-threonyl-[protein] + UDP-N-acetyl-alpha-D-galactosamine = a 3-O-[N-acetyl-alpha-D-galactosaminyl]-L-threonyl-[protein] + UDP + H(+). The protein operates within protein modification; protein glycosylation. Its function is as follows. Catalyzes the initial reaction in O-linked oligosaccharide biosynthesis, the transfer of an N-acetyl-D-galactosamine residue to a serine or threonine residue on the protein receptor. Has a broad spectrum of substrates for peptides such as EA2, Muc5AC, Muc1a, Muc1b. Probably involved in O-linked glycosylation of the immunoglobulin A1 (IgA1) hinge region. Involved in O-linked glycosylation of APOC-III, ANGPTL3 and PLTP. It participates in the regulation of HDL-C metabolism. The chain is Polypeptide N-acetylgalactosaminyltransferase 2 (Galnt2) from Mus musculus (Mouse).